Here is a 232-residue protein sequence, read N- to C-terminus: Phycobilisome rod-core linker polypeptide cpcG (232 aa).

Residues 11–191 (STQNQRVDGY…PRYGADFKEK (181 aa)) form the PBS-linker domain.

The protein belongs to the phycobilisome linker protein family. The phycobilisome is a hemidiscoidal structure that is composed of two distinct substructures: a core complex and a number of rods radiating from the core.

It is found in the plastid. The protein resides in the chloroplast. The protein localises to the chloroplast thylakoid membrane. Functionally, rod-core linker protein required for attachment of phycocyanin to allophycocyanin in cores of phycobilisomes. Linker polypeptides determine the state of aggregation and the location of the disk-shaped phycobiliprotein units within the phycobilisome and modulate their spectroscopic properties in order to mediate a directed and optimal energy transfer. The polypeptide is Phycobilisome rod-core linker polypeptide cpcG (cpcG) (Pyropia yezoensis (Susabi-nori)).